The following is a 305-amino-acid chain: Peroxisome assembly protein 26 (305 aa).

The interval 1 to 25 is disordered; the sequence is MKSDCSTSAAPFRGLGGPLRSSEPV. The Cytoplasmic portion of the chain corresponds to 1 to 246; the sequence is MKSDCSTSAA…RQLWDSAVSH (246 aa). The helical; Signal-anchor for type II membrane protein transmembrane segment at 247–267 threads the bilayer; that stretch reads FFSLPFKKSLLAALILCLLVV. Residues 268 to 305 are Peroxisomal matrix-facing; sequence RFDPASPSSLPSLYKLAQLFRWIRKAASSRLYQLRIRD.

This sequence belongs to the peroxin-26 family. As to quaternary structure, interacts (via its cytoplasmic domain) with PEX6; interaction is direct and is ATP-dependent. Interacts with PEX1; interaction is indirect and is mediated via interaction with PEX6.

The protein localises to the peroxisome membrane. Peroxisomal docking factor that anchors PEX1 and PEX6 to peroxisome membranes. PEX26 is therefore required for the formation of the PEX1-PEX6 AAA ATPase complex, a complex that mediates the extraction of the PEX5 receptor from peroxisomal membrane. The sequence is that of Peroxisome assembly protein 26 (PEX26) from Macaca fascicularis (Crab-eating macaque).